Here is a 427-residue protein sequence, read N- to C-terminus: Protein adenylyltransferase Fic (427 aa).

The chain crosses the membrane as a helical span at residues 17 to 37; that stretch reads LLLASLAGLSIAIIVTHAPVF. TPR repeat units lie at residues 77–110 and 111–143; these read ALAA…APHH and PEIL…NPLD. The short motif at 200-205 is the Inhibitory (S/T)XXXE(G/N) motif element; that stretch reads SNAIEG. ATP is bound by residues glutamate 204 and 286–289; that span reads VSDH. The 136-residue stretch at 255–390 folds into the Fido domain; the sequence is ITIDDIIEIH…IRPFIRFVAR (136 aa). Histidine 333 is an active-site residue. ATP-binding positions include 337 to 344, 369 to 370, and asparagine 377; these read DGNGRTAR and YY.

This sequence belongs to the fic family. As to quaternary structure, homodimer.

The protein resides in the membrane. The catalysed reaction is L-tyrosyl-[protein] + ATP = O-(5'-adenylyl)-L-tyrosyl-[protein] + diphosphate. The enzyme catalyses L-threonyl-[protein] + ATP = 3-O-(5'-adenylyl)-L-threonyl-[protein] + diphosphate. It carries out the reaction 3-O-(5'-adenylyl)-L-threonyl-[protein] + H2O = L-threonyl-[protein] + AMP + H(+). Its activity is regulated as follows. The side chain of Glu-204 determines which of the two opposing activities (AMPylase or de-AMPylase) will take place. In response to endoplasmic reticulum stress, mediates de-AMPylase activity. Adenylyltransferase activity is inhibited by the inhibitory helix present at the N-terminus: Glu-204 binds ATP and competes with ATP-binding at Arg-344, thereby preventing adenylyltransferase activity. In unstressed cells, disengagement of Glu-204 promotes adenylyltransferase activity. Activation dissociates ATP-binding from Glu-204, allowing ordered binding of the entire ATP moiety with the alpha-phosphate in an orientation that is productive for accepting an incoming target hydroxyl side chain. Functionally, protein that can both mediate the addition of adenosine 5'-monophosphate (AMP) to specific residues of target proteins (AMPylation), and the removal of the same modification from target proteins (de-AMPylation), depending on the context. The side chain of Glu-204 determines which of the two opposing activities (AMPylase or de-AMPylase) will take place. Acts as a key regulator of the unfolded protein response (UPR) by mediating AMPylation or de-AMPylation of Hsc70-3/BiP. In unstressed cells, acts as an adenylyltransferase by mediating AMPylation of Hsc70-3/BiP, thereby inactivating it. In response to endoplasmic reticulum stress, acts as a phosphodiesterase by mediating removal of ATP (de-AMPylation) from Hsc70-3/BiP, leading to restore HSPA5/BiP activity. This Nematostella vectensis (Starlet sea anemone) protein is Protein adenylyltransferase Fic.